The following is a 61-amino-acid chain: Copper metallothionein 1-1 (61 aa).

The propeptide occupies 1 to 8; that stretch reads MFSELINF. Residues Cys-15, Cys-17, Cys-19, Cys-22, and Cys-28 each coordinate Cu cation. A Glycyl lysine isopeptide (Lys-Gly) (interchain with G-Cter in ubiquitin) cross-link involves residue Lys-30. Residues Cys-32, Cys-34, Cys-38, Cys-44, and Cys-46 each contribute to the Cu cation site. The tract at residues 37-61 is disordered; that stretch reads GCNSDDKCPCGNKSEETKKSCCSGK. Basic and acidic residues predominate over residues 40–55; sequence SDDKCPCGNKSEETKK.

This sequence belongs to the metallothionein superfamily. Type 12 family.

In terms of biological role, protects the cell against copper toxicity by tightly chelating copper ions. May also act as a depository for copper designated for the effective transfer into the apo forms of copper proteins. The polypeptide is Copper metallothionein 1-1 (CUP1-1) (Saccharomyces cerevisiae (strain ATCC 204508 / S288c) (Baker's yeast)).